The sequence spans 630 residues: Probable potassium transport system protein Kup (630 aa).

12 helical membrane-spanning segments follow: residues 17–37 (LAIA…LYSL), 51–71 (PSAI…VVGI), 105–125 (ITGL…GDAV), 144–164 (PQLS…LFWI), 175–195 (LFGP…IYHI), 218–238 (VLLA…AEAL), 255–275 (YVLV…LLLL), 283–303 (PFFL…STVA), 344–364 (IYVP…VIGF), 374–394 (YGIA…VVMV), 402–422 (LLVA…FGAN), and 428–448 (QGGW…MTWY).

This sequence belongs to the HAK/KUP transporter (TC 2.A.72) family.

It is found in the cell inner membrane. The catalysed reaction is K(+)(in) + H(+)(in) = K(+)(out) + H(+)(out). Its function is as follows. Transport of potassium into the cell. Likely operates as a K(+):H(+) symporter. This is Probable potassium transport system protein Kup from Burkholderia mallei (strain NCTC 10247).